Reading from the N-terminus, the 249-residue chain is Small ribosomal subunit protein uS2 (249 aa).

It belongs to the universal ribosomal protein uS2 family.

The polypeptide is Small ribosomal subunit protein uS2 (Bordetella avium (strain 197N)).